A 181-amino-acid polypeptide reads, in one-letter code: MDGLMSSADEILDIVDENDRVVGQARRGDAYARGLRHRCVFVWARDPEGRVFVHRRTATKLVFPAPYDMFVGGVVGAGESYDDAALREAEEELGASGLPRPEFLFKFLYDDGAGRTWWSAVYEVRVAGAVSPQVEEVAWHGFLPEAELEGRLGEWEFVPDGLSAYARLRAWRGASGPGSVG.

Positions 35 to 175 constitute a Nudix hydrolase domain; the sequence is LRHRCVFVWA…ARLRAWRGAS (141 aa). Positions 72 to 94 match the Nudix box motif; it reads GGVVGAGESYDDAALREAEEELG. Residues E88 and E92 each contribute to the Mg(2+) site.

This sequence belongs to the Nudix hydrolase family. It depends on Mg(2+) as a cofactor.

This is an uncharacterized protein from Streptomyces coelicolor (strain ATCC BAA-471 / A3(2) / M145).